An 870-amino-acid chain; its full sequence is MOG interacting and ectopic P-granules protein 1 (870 aa).

The disordered stretch occupies residues 1 to 244 (MVTADETVLA…VPEEDNNEQA (244 aa)). Residues 9–20 (LATTTNTTSMSV) are compositionally biased toward polar residues. The span at 41-51 (EQLKAEQREVM) shows a compositional bias: basic and acidic residues. Composition is skewed to acidic residues over residues 77–99 (EVIEIDDTEESTDPSPDGSDENG), 129–142 (IEQDDDGDVMEITE), and 203–214 (IELDDDDDDEIQ). C2H2-type zinc fingers lie at residues 421 to 444 (HRCDVCGFQTESKLVMSTHKENLH) and 450 to 473 (FQCTMCKETDTSEQRMKDHYFETH). A CCHC-type zinc finger spans residues 486–508 (YPCAICEEDFNFKGVREQHYKQC). Composition is skewed to polar residues over residues 673–688 (LQAAVNSMRSQNSQKT) and 695–708 (KLVTTPSHATVGSS). Residues 673-708 (LQAAVNSMRSQNSQKTPTHRSSKLVTTPSHATVGSS) form a disordered region. C2H2-type zinc fingers lie at residues 713 to 736 (FVCEICDASVQEKEKYLQHLQTTH), 753 to 776 (LACSRCRDRFWTYEGLERHLVMSH), 794 to 815 (GRCKTCGKNYAFNMLQHLVADH), and 826 to 849 (YSCDVCAFKCSSYQTLEAHLTSNH). Residues 847–870 (SNHPKGDKKTSTPAKKDDCITLDD) form a disordered region. Over residues 850–870 (PKGDKKTSTPAKKDDCITLDD) the composition is skewed to basic and acidic residues.

As to quaternary structure, interacts with hda-1, let-418, lin-1, mog-1, mog-4, mog-5, mog-6, pie-1 and unc-98. In terms of processing, sumoylated. In terms of tissue distribution, expressed in somatic cells of embryos, the head, hypodermis and tail of larvae and the germline of adults, including oocytes but not mature sperm and spermatocytes.

The protein localises to the nucleus. Its function is as follows. Has a broad role in development, specifically in the genetic pathway SynMuvB that negatively regulates specification of the vulval cell fate. Required for fem-3 3'-UTR-mediated repression in the regulation of the sperm/oocyte switch. Acts by regulating the translation of fem-3 mRNA, by binding to its 3'-UTR. This is MOG interacting and ectopic P-granules protein 1 from Caenorhabditis elegans.